Consider the following 430-residue polypeptide: Glutamate-1-semialdehyde 2,1-aminomutase (430 aa).

N6-(pyridoxal phosphate)lysine is present on lysine 265.

It belongs to the class-III pyridoxal-phosphate-dependent aminotransferase family. HemL subfamily. Homodimer. It depends on pyridoxal 5'-phosphate as a cofactor.

Its subcellular location is the cytoplasm. It catalyses the reaction (S)-4-amino-5-oxopentanoate = 5-aminolevulinate. It participates in porphyrin-containing compound metabolism; protoporphyrin-IX biosynthesis; 5-aminolevulinate from L-glutamyl-tRNA(Glu): step 2/2. The sequence is that of Glutamate-1-semialdehyde 2,1-aminomutase from Shewanella baltica (strain OS155 / ATCC BAA-1091).